A 319-amino-acid chain; its full sequence is tRNA uridine(34) hydroxylase (319 aa).

Residues 124-218 (LDEDTVILDA…YGKNEETKGE (95 aa)) enclose the Rhodanese domain. Cys178 functions as the Cysteine persulfide intermediate in the catalytic mechanism.

The protein belongs to the TrhO family.

The enzyme catalyses uridine(34) in tRNA + AH2 + O2 = 5-hydroxyuridine(34) in tRNA + A + H2O. Functionally, catalyzes oxygen-dependent 5-hydroxyuridine (ho5U) modification at position 34 in tRNAs. The polypeptide is tRNA uridine(34) hydroxylase (Listeria monocytogenes serovar 1/2a (strain ATCC BAA-679 / EGD-e)).